A 112-amino-acid polypeptide reads, in one-letter code: Small ribosomal subunit protein uS11c (112 aa).

Belongs to the universal ribosomal protein uS11 family. In terms of assembly, part of the 30S ribosomal subunit.

Its subcellular location is the plastid. This is Small ribosomal subunit protein uS11c from Euglena longa (Euglenophycean alga).